The following is a 424-amino-acid chain: MTRPIGIDLFAGAGGLSLGFEQAGFDLVAAVDIDPIHCAAHKFNFPKCATVCKSVVDVTGDELRRIAGIGKRDIDIVIGGAPCQGFSLIGKRALDDSRNQLVHHYVRVVMELKPKYFVFENVKGLTVGKHRQFLKEVIEAFQNGGYDVVTDYRVLNAADYGVPQDRRRLILMGARKGLPLPAYPEPTGRTTVGDAIGDIPDAESFPELWERDWVKAKYGKPSTYAAYLRGKKDDPTDFGYRRQFDPMLLTGSLLTDHTELSRQRFAAIAPDDVEPVSRFKKLALNGICNTLRAGTASDRGAFTSPRPIHPTVPRVITVREAARLHSYPDWFRFHATKWHGFRQIGNSVPPLLARAVGGQIMKALRKKPEKPSEMLALGDQSLIGISMTDAAAMFGVSSTVIARRSRPVDRPAPRRHEERELVTA.

In terms of domain architecture, SAM-dependent MTase C5-type spans 4-367 (PIGIDLFAGA…GQIMKALRKK (364 aa)). Cysteine 83 is an active-site residue. The tract at residues 404-424 (RSRPVDRPAPRRHEERELVTA) is disordered. The segment covering 406 to 424 (RPVDRPAPRRHEERELVTA) has biased composition (basic and acidic residues).

It belongs to the class I-like SAM-binding methyltransferase superfamily. C5-methyltransferase family.

It catalyses the reaction a 2'-deoxycytidine in DNA + S-adenosyl-L-methionine = a 5-methyl-2'-deoxycytidine in DNA + S-adenosyl-L-homocysteine + H(+). Functionally, a methylase that recognizes the double-stranded sequence 5'-CGATCG-3', methylates C-? on both strands and protects the DNA from cleavage by the XorII endonuclease. The protein is Type II methyltransferase M.XorII (xorIIM) of Xanthomonas oryzae pv. oryzae (strain KACC10331 / KXO85).